We begin with the raw amino-acid sequence, 388 residues long: Chalcone synthase (388 aa).

Cysteine 164 is a catalytic residue.

Belongs to the thiolase-like superfamily. Chalcone/stilbene synthases family.

It catalyses the reaction (E)-4-coumaroyl-CoA + 3 malonyl-CoA + 3 H(+) = 2',4,4',6'-tetrahydroxychalcone + 3 CO2 + 4 CoA. It functions in the pathway secondary metabolite biosynthesis; flavonoid biosynthesis. The primary product of this enzyme is 4,2',4',6'-tetrahydroxychalcone (also termed naringenin-chalcone or chalcone) which can under specific conditions spontaneously isomerize into naringenin. This is Chalcone synthase (CHS) from Vigna unguiculata (Cowpea).